Reading from the N-terminus, the 151-residue chain is Urease accessory protein UreE (151 aa).

Belongs to the UreE family.

The protein resides in the cytoplasm. Functionally, involved in urease metallocenter assembly. Binds nickel. Probably functions as a nickel donor during metallocenter assembly. This is Urease accessory protein UreE from Bacillus cereus (strain ATCC 10987 / NRS 248).